The following is a 230-amino-acid chain: 3-beta-hydroxysteroid-Delta(8),Delta(7)-isomerase (230 aa).

Thr2 carries the post-translational modification N-acetylthreonine. 4 helical membrane passes run 29–49 (SHIL…TWLL), 66–86 (LCWF…FSLY), 121–141 (METV…IAFL), and 185–205 (FWFY…ILVL). One can recognise an EXPERA domain in the interval 61 to 204 (GRRLALCWFA…VWLVIPSILV (144 aa)).

It belongs to the EBP family.

It localises to the endoplasmic reticulum membrane. The protein localises to the nucleus envelope. It is found in the cytoplasmic vesicle. The catalysed reaction is lathosterol = 5alpha-cholest-8-en-3beta-ol. It catalyses the reaction zymosterol = 5alpha-cholesta-7,24-dien-3beta-ol. It carries out the reaction 5,6alpha-epoxy-5alpha-cholestan-3beta-ol + H2O = 5alpha-cholestane-3beta,5,6beta-triol. The enzyme catalyses 5,6beta-epoxy-5beta-cholestan-3beta-ol + H2O = 5alpha-cholestane-3beta,5,6beta-triol. The protein operates within steroid biosynthesis; cholesterol biosynthesis. Functionally, isomerase that catalyzes the conversion of Delta(8)-sterols to their corresponding Delta(7)-isomers. Component of the microsomal antiestrogen binding site (AEBS), a multiproteic complex at the ER membrane that consists of an association between EBP and 7-dehydrocholesterol reductase/DHCR7. This complex is responsible for cholesterol-5,6-epoxide hydrolase (ChEH) activity, which consists in the hydration of cholesterol-5,6-epoxides (5,6-EC) into cholestane-3beta,5alpha,6beta-triol (CT). The precise role of each component of this complex has not been described yet. The chain is 3-beta-hydroxysteroid-Delta(8),Delta(7)-isomerase from Mus musculus (Mouse).